The primary structure comprises 339 residues: Ketol-acid reductoisomerase (NADP(+)) (339 aa).

Residues 1 to 182 form the KARI N-terminal Rossmann domain; that stretch reads MRVYYDRDAD…GGGRAGIIET (182 aa). NADP(+) is bound by residues 24–27, Arg-48, Ser-51, Ser-53, and 83–86; these read YGSQ and DELQ. The active site involves His-108. Position 134 (Gly-134) interacts with NADP(+). The KARI C-terminal knotted domain occupies 183 to 328; it reads SFREETETDL…ARLRDMMPWI (146 aa). Mg(2+) is bound by residues Asp-191, Glu-195, Glu-227, and Glu-231. Residue Ser-252 participates in substrate binding.

Belongs to the ketol-acid reductoisomerase family. It depends on Mg(2+) as a cofactor.

The enzyme catalyses (2R)-2,3-dihydroxy-3-methylbutanoate + NADP(+) = (2S)-2-acetolactate + NADPH + H(+). It carries out the reaction (2R,3R)-2,3-dihydroxy-3-methylpentanoate + NADP(+) = (S)-2-ethyl-2-hydroxy-3-oxobutanoate + NADPH + H(+). It participates in amino-acid biosynthesis; L-isoleucine biosynthesis; L-isoleucine from 2-oxobutanoate: step 2/4. It functions in the pathway amino-acid biosynthesis; L-valine biosynthesis; L-valine from pyruvate: step 2/4. Functionally, involved in the biosynthesis of branched-chain amino acids (BCAA). Catalyzes an alkyl-migration followed by a ketol-acid reduction of (S)-2-acetolactate (S2AL) to yield (R)-2,3-dihydroxy-isovalerate. In the isomerase reaction, S2AL is rearranged via a Mg-dependent methyl migration to produce 3-hydroxy-3-methyl-2-ketobutyrate (HMKB). In the reductase reaction, this 2-ketoacid undergoes a metal-dependent reduction by NADPH to yield (R)-2,3-dihydroxy-isovalerate. This chain is Ketol-acid reductoisomerase (NADP(+)), found in Afipia carboxidovorans (strain ATCC 49405 / DSM 1227 / KCTC 32145 / OM5) (Oligotropha carboxidovorans).